Consider the following 212-residue polypeptide: ATP phosphoribosyltransferase (212 aa).

This sequence belongs to the ATP phosphoribosyltransferase family. Short subfamily. As to quaternary structure, heteromultimer composed of HisG and HisZ subunits.

The protein localises to the cytoplasm. It catalyses the reaction 1-(5-phospho-beta-D-ribosyl)-ATP + diphosphate = 5-phospho-alpha-D-ribose 1-diphosphate + ATP. It functions in the pathway amino-acid biosynthesis; L-histidine biosynthesis; L-histidine from 5-phospho-alpha-D-ribose 1-diphosphate: step 1/9. Catalyzes the condensation of ATP and 5-phosphoribose 1-diphosphate to form N'-(5'-phosphoribosyl)-ATP (PR-ATP). Has a crucial role in the pathway because the rate of histidine biosynthesis seems to be controlled primarily by regulation of HisG enzymatic activity. The sequence is that of ATP phosphoribosyltransferase from Clostridium botulinum (strain Okra / Type B1).